The sequence spans 429 residues: Histidine--tRNA ligase (429 aa).

This sequence belongs to the class-II aminoacyl-tRNA synthetase family. Homodimer.

It is found in the cytoplasm. The enzyme catalyses tRNA(His) + L-histidine + ATP = L-histidyl-tRNA(His) + AMP + diphosphate + H(+). This chain is Histidine--tRNA ligase, found in Streptococcus pneumoniae serotype 4 (strain ATCC BAA-334 / TIGR4).